A 992-amino-acid chain; its full sequence is GATOR2 complex protein WDR59 (992 aa).

WD repeat units follow at residues 57–98, 103–143, 146–185, 189–229, 232–276, 278–318, and 319–362; these read QSKW…GEVG, GHTR…KPTV, SAVA…TAVE, AHLS…KYLN, PCQV…APVH, FVGH…RVDY, and QMQR…SLSH. Residues 343 to 373 form a disordered region; that stretch reads PEPEKTPHPQDIDHQPSLSHGEEDAIKEDPP. The segment covering 344–373 has biased composition (basic and acidic residues); that stretch reads EPEKTPHPQDIDHQPSLSHGEEDAIKEDPP. Residues 393-494 form the RWD domain; the sequence is QEFSLINVQI…RQLVSCLESF (102 aa). Ser-564 is modified (phosphoserine). A WD 8 repeat occupies 660–706; that stretch reads KSLGELYILNVNDTQETCQKNATSAMLVGRKDLVQVWSLATVATDLC. Phosphoserine occurs at positions 839, 840, and 848. The interval 849–870 is disordered; sequence LTYSDPRERERDQHDKNKRLLD. Residues 853 to 869 show a composition bias toward basic and acidic residues; it reads DPRERERDQHDKNKRLL. The C4-type zinc finger occupies 919–939; the sequence is YCSHCRSEVRGTQCAICKGFT. The Zn(2+) site is built by Cys-920, Cys-923, Cys-932, Cys-935, Cys-945, Cys-956, His-961, His-964, His-967, Cys-978, Cys-982, Cys-984, and Cys-986. The RING-type; atypical zinc-finger motif lies at 940-989; the sequence is FQCAICHVAVRGSSNFCLTCGHGGHTSHMMEWFRTQEVCPTGCGCHCLLE.

It belongs to the WD repeat WDR59 family. Component of the GATOR2 subcomplex, composed of MIOS, SEC13, SEH1L, WDR24 and WDR59. The GATOR2 complex interacts with CASTOR1 and CASTOR2; the interaction is negatively regulated by arginine. The GATOR2 complex interacts with SESN1, SESN2 and SESN3; the interaction is negatively regulated by amino acids. Interacts with DDB1-CUL4A/B E3 ligase complexes.

It localises to the lysosome membrane. The GATOR2 complex is negatively regulated by the upstream amino acid sensors CASTOR1 and SESN2, which sequester the GATOR2 complex in absence of amino acids. In the presence of abundant amino acids, GATOR2 is released from CASTOR1 and SESN2 and activated. Its function is as follows. As a component of the GATOR2 complex, functions as an activator of the amino acid-sensing branch of the mTORC1 signaling pathway. The GATOR2 complex indirectly activates mTORC1 through the inhibition of the GATOR1 subcomplex. GATOR2 probably acts as an E3 ubiquitin-protein ligase toward GATOR1. In the presence of abundant amino acids, the GATOR2 complex mediates ubiquitination of the NPRL2 core component of the GATOR1 complex, leading to GATOR1 inactivation. In the absence of amino acids, GATOR2 is inhibited, activating the GATOR1 complex. This chain is GATOR2 complex protein WDR59, found in Mus musculus (Mouse).